A 615-amino-acid chain; its full sequence is MPIQVLPPQLANQIAAGEVVERPASVVKELVENSLDAGATRIDIDIERGGAKLIRIRDNGCGIKKDELALALARHATSKIASLDDLEAIISLGFRGEALASISSVSRLTLTSRIAEQQEAWQAYAEGRDMDVTVKPAAHPVGTTLEVLDLFYNTPARRKFLRTEKTEFNHIDEIIRRIALARFDVTINLSHNGKIVRQYRAVPEGGQKERRLGAICGTAFLEQALAIEWQHGDLTLRGWVADPNHTTPALAEIQYCYVNGRMMRDRLINHAIRQACEDKLGADQQPAFVLYLEIDPHQVDVNVHPAKHEVRFHQSRLVHDFIYQGVLSVLQQQLETPLPLDDDPQPAPRAIPENRVAAGRNHFAEPAVREPVAPRYTPAPASGSRPAAPWPNAQPGYQKQQGEVYRQLLQTPAPMQKPKAPEPQEPALAANSQSFGRVLTIVHSDCALLERGGNISLLALPVAERWLRQAQLTPGEAPVCAQPLLIPLRLKVSGEEKSALEKAQSALAELGIDFQSDAQHVTIRAVPLPLRQQNLQILIPELIGYLAKQSVFEPGNIAQWIARNLMSEHAQWSMAQAITLLADVERLCPQLVKTPPGGLLQSVDLHPAIKALKDE.

A disordered region spans residues 362 to 397 (HFAEPAVREPVAPRYTPAPASGSRPAAPWPNAQPGY). Low complexity predominate over residues 378 to 391 (PAPASGSRPAAPWP).

This sequence belongs to the DNA mismatch repair MutL/HexB family.

This protein is involved in the repair of mismatches in DNA. It is required for dam-dependent methyl-directed DNA mismatch repair. May act as a 'molecular matchmaker', a protein that promotes the formation of a stable complex between two or more DNA-binding proteins in an ATP-dependent manner without itself being part of a final effector complex. In Escherichia coli O17:K52:H18 (strain UMN026 / ExPEC), this protein is DNA mismatch repair protein MutL.